A 292-amino-acid chain; its full sequence is MSEIRLYVTTTEIKAGEILDLMSDYFGEEDVAIATTEVDEKRDIWEASVYLMAEQEEEFRERVSTLLAPAFPGLVIEKEIIPDVDWIAKSLEGLKPVRAGRFIVHGAHDRDKVQPHDLAIEIEAGQAFGTGHHGTTAGCLEMIEDVLRARKVRNALDLGTGSGVLAIAVRKMRPIPVLATDIDPIAVKVAKENVRLNGIVSGMALETAPGFHSDAFRKHGPFDLIIANILARPLIKMAPQLVTHLAPGGTVILSGILASQRWKVLSAYNGAKLSHIRTIWRNDWVTLHLRKD.

Residues T136, G159, D181, and N228 each coordinate S-adenosyl-L-methionine.

The protein belongs to the methyltransferase superfamily. PrmA family.

It localises to the cytoplasm. The enzyme catalyses L-lysyl-[protein] + 3 S-adenosyl-L-methionine = N(6),N(6),N(6)-trimethyl-L-lysyl-[protein] + 3 S-adenosyl-L-homocysteine + 3 H(+). Methylates ribosomal protein L11. This is Ribosomal protein L11 methyltransferase from Agrobacterium fabrum (strain C58 / ATCC 33970) (Agrobacterium tumefaciens (strain C58)).